The following is a 218-amino-acid chain: Probable nicotinate-nucleotide adenylyltransferase (218 aa).

The protein belongs to the NadD family.

It carries out the reaction nicotinate beta-D-ribonucleotide + ATP + H(+) = deamido-NAD(+) + diphosphate. Its pathway is cofactor biosynthesis; NAD(+) biosynthesis; deamido-NAD(+) from nicotinate D-ribonucleotide: step 1/1. In terms of biological role, catalyzes the reversible adenylation of nicotinate mononucleotide (NaMN) to nicotinic acid adenine dinucleotide (NaAD). The protein is Probable nicotinate-nucleotide adenylyltransferase of Halorhodospira halophila (strain DSM 244 / SL1) (Ectothiorhodospira halophila (strain DSM 244 / SL1)).